A 264-amino-acid chain; its full sequence is Phosphonoacetaldehyde hydrolase (264 aa).

Aspartate 9 serves as the catalytic Nucleophile. Mg(2+)-binding residues include aspartate 9 and alanine 11. Lysine 50 serves as the catalytic Schiff-base intermediate with substrate. Aspartate 183 contributes to the Mg(2+) binding site.

Belongs to the HAD-like hydrolase superfamily. PhnX family. As to quaternary structure, homodimer. Mg(2+) serves as cofactor.

It carries out the reaction phosphonoacetaldehyde + H2O = acetaldehyde + phosphate + H(+). Its function is as follows. Involved in phosphonate degradation. In Bacillus cereus (strain ATCC 10987 / NRS 248), this protein is Phosphonoacetaldehyde hydrolase.